We begin with the raw amino-acid sequence, 315 residues long: Sulfate adenylyltransferase subunit 2 1 (315 aa).

The segment at 287 to 315 (DSSSSERQGRAIDHDQSGSMERKKREGYF) is disordered. Residues 293 to 315 (RQGRAIDHDQSGSMERKKREGYF) are compositionally biased toward basic and acidic residues.

Belongs to the PAPS reductase family. CysD subfamily. In terms of assembly, heterodimer composed of CysD, the smaller subunit, and CysN.

The catalysed reaction is sulfate + ATP + H(+) = adenosine 5'-phosphosulfate + diphosphate. Its pathway is sulfur metabolism; hydrogen sulfide biosynthesis; sulfite from sulfate: step 1/3. With CysN forms the ATP sulfurylase (ATPS) that catalyzes the adenylation of sulfate producing adenosine 5'-phosphosulfate (APS) and diphosphate, the first enzymatic step in sulfur assimilation pathway. APS synthesis involves the formation of a high-energy phosphoric-sulfuric acid anhydride bond driven by GTP hydrolysis by CysN coupled to ATP hydrolysis by CysD. The protein is Sulfate adenylyltransferase subunit 2 1 of Alkalilimnicola ehrlichii (strain ATCC BAA-1101 / DSM 17681 / MLHE-1).